A 1183-amino-acid chain; its full sequence is DNA-directed RNA polymerase subunit beta (1183 aa).

The span at 1151 to 1162 (EIEMADVDDEDA) shows a compositional bias: acidic residues. A disordered region spans residues 1151-1183 (EIEMADVDDEDAAERKVDLQQKSAPESQKETTD).

The protein belongs to the RNA polymerase beta chain family. In terms of assembly, the RNAP catalytic core consists of 2 alpha, 1 beta, 1 beta' and 1 omega subunit. When a sigma factor is associated with the core the holoenzyme is formed, which can initiate transcription.

The enzyme catalyses RNA(n) + a ribonucleoside 5'-triphosphate = RNA(n+1) + diphosphate. Functionally, DNA-dependent RNA polymerase catalyzes the transcription of DNA into RNA using the four ribonucleoside triphosphates as substrates. In Staphylococcus epidermidis (strain ATCC 12228 / FDA PCI 1200), this protein is DNA-directed RNA polymerase subunit beta.